We begin with the raw amino-acid sequence, 682 residues long: Pesticidal crystal protein Cry19Ba (682 aa).

It belongs to the delta endotoxin family.

In terms of biological role, promotes colloidosmotic lysis by binding to the midgut epithelial cells of mosquitos. Has larvicidal activity against Culex pipiens molestus, but not to Anopheles stephensi. This is Pesticidal crystal protein Cry19Ba from Bacillus thuringiensis subsp. higo.